Consider the following 226-residue polypeptide: MIVIEQILSKQDVGAYRQQLAECPWGDGRKTAMGMAASVKNNNQADAQHANVRQLANQLLARIGETPKIVSAALPHKIFPPCFNRYNETEEYGYHVDAAIMRIPNTSEVIRSDVSMTVFLSEPEEYDGGELVIATEFGQQQIKLPAGYAVVYPSSSLHKVTAVTRGQRIAAITWMQSMVADVTLRQTLYQLDQSIQNLIKANNTDRAELDNLHNVYHNLIRQFTQL.

One can recognise a Fe2OG dioxygenase domain in the interval 77–177; it reads KIFPPCFNRY…RIAAITWMQS (101 aa). Residues His95, Asp97, and His158 each contribute to the Fe cation site. Arg168 is a binding site for 2-oxoglutarate.

It depends on Fe(2+) as a cofactor. Requires L-ascorbate as cofactor.

The protein is PKHD-type hydroxylase Sfri_0612 of Shewanella frigidimarina (strain NCIMB 400).